The sequence spans 370 residues: tRNA pseudouridine(27/28) synthase (370 aa).

The Nucleophile role is filled by Asp56. Tyr111 contacts substrate.

Belongs to the tRNA pseudouridine synthase TruA family.

The protein resides in the mitochondrion. The enzyme catalyses uridine(27/28) in mitochondrial tRNA = pseudouridine(27/28) in mitochondrial tRNA. In terms of biological role, mitochondrial-specific pseudouridine synthase catalyzing the formation of pseudouridine at positions 27 and 28 in the anticodon stem and loop of mitochondrial transfer RNAs. The protein is tRNA pseudouridine(27/28) synthase (PUS2) of Saccharomyces cerevisiae (strain ATCC 204508 / S288c) (Baker's yeast).